The following is a 319-amino-acid chain: Taste receptor type 2 member 30 (319 aa).

Residue Met-1 is a topological domain, extracellular. The chain crosses the membrane as a helical span at residues 2–22 (ITFLPIIFSILIVVIFVIGNF). The Cytoplasmic segment spans residues 23–46 (ANGFIALVNSIEWVKRQKISFADQ). The chain crosses the membrane as a helical span at residues 47–67 (ILIALAVSRVGLLWALLLHWY). Residues 68–86 (ATELNLAFYSVEVRITAYN) are Extracellular-facing. A helical transmembrane segment spans residues 87–107 (VWAVTNHFSNWLATSLSMFYL). Residues 108 to 126 (LKIANFSNLIFLRIKRRVK) lie on the Cytoplasmic side of the membrane. A helical membrane pass occupies residues 127–147 (SVILVILLGPLLFLVCHLFVI). At 148–178 (NMNEIVWTKEYEGNLTWKIKLRNAVFLSNMT) the chain is on the extracellular side. N-linked (GlcNAc...) asparagine glycans are attached at residues Asn-161 and Asn-176. A helical membrane pass occupies residues 179–199 (LTMLANFVPLTLTLISFLLLI). Topologically, residues 200-229 (CSLCKHLKKMQLHGKGSQDPSTKVHIKALQ) are cytoplasmic. Residues 230–250 (TVTCFLLLCAIYFLSMIISVY) traverse the membrane as a helical segment. The Extracellular portion of the chain corresponds to 251–259 (NFGRLEKKP). A helical membrane pass occupies residues 260-280 (VFMFCQAITFSYPSTHAFILI). At 281 to 319 (WGNKKLKQIFLSVLWHVRYWVKDRSLRLHRFTRAALCKG) the chain is on the cytoplasmic side.

It belongs to the G-protein coupled receptor T2R family.

The protein localises to the membrane. Receptor that may play a role in the perception of bitterness and is gustducin-linked. May play a role in sensing the chemical composition of the gastrointestinal content. The activity of this receptor may stimulate alpha gustducin, mediate PLC-beta-2 activation and lead to the gating of TRPM5. This chain is Taste receptor type 2 member 30 (TAS2R30), found in Pongo pygmaeus (Bornean orangutan).